The sequence spans 326 residues: N-(2-amino-2-carboxyethyl)-L-glutamate synthase (326 aa).

Lys47 carries the N6-(pyridoxal phosphate)lysine modification. Residues Asn77, 185–189 (STTGS), and Ser272 each bind pyridoxal 5'-phosphate.

This sequence belongs to the cysteine synthase/cystathionine beta-synthase family. SbnA subfamily. In terms of assembly, homodimer. Pyridoxal 5'-phosphate is required as a cofactor.

The enzyme catalyses O-phospho-L-serine + L-glutamate = N-[(2S)-2-amino-2-carboxyethyl]-L-glutamate + phosphate + H(+). It functions in the pathway siderophore biosynthesis. In terms of biological role, catalyzes the synthesis of N-((2S)-2-amino-2-carboxyethyl)-L-glutamate (ACEGA) from O-phospho-L-serine and L-glutamate. Involved in the biosynthesis of L-2,3-diaminopropionic acid (L-Dap), a precursor of staphyloferrin B and antibiotics. In Staphylococcus aureus (strain COL), this protein is N-(2-amino-2-carboxyethyl)-L-glutamate synthase (sbnA).